We begin with the raw amino-acid sequence, 276 residues long: MKGQILREMKVLNAIDPAFEVQRRVAFIKTKLKQSNTQSLVLGISGGVDSSLAGRLCQLAVDEINADTDGSGYQFIAVRLPYDIQKDEDEAQLACQFIKPSKQVTVNVKDGVNGIHSETLSAIEMAGIVLPDNTNIDFVKGNVKARMRMVAQYEIAGLVAGLVVGTDHSAENITGFYTKWGDGACDLAPLFGLNKRQVRTLAHFLGAPDILVNKAPTADLEEGQPQLEDEIALGLTYDQIDDFLEGKEVSEAVNDRLVSIYRATQHKRDAIPTIYD.

Residue 43-50 (GISGGVDS) participates in ATP binding. Asp49 serves as a coordination point for Mg(2+). Residue Arg146 coordinates deamido-NAD(+). Thr166 is an ATP binding site. Glu171 contacts Mg(2+). Deamido-NAD(+) contacts are provided by Lys179 and Asp186. Residues Lys195 and Thr217 each contribute to the ATP site. Residue 266-267 (HK) coordinates deamido-NAD(+).

It belongs to the NAD synthetase family. In terms of assembly, homodimer.

It carries out the reaction deamido-NAD(+) + NH4(+) + ATP = AMP + diphosphate + NAD(+) + H(+). Its pathway is cofactor biosynthesis; NAD(+) biosynthesis; NAD(+) from deamido-NAD(+) (ammonia route): step 1/1. Functionally, catalyzes the ATP-dependent amidation of deamido-NAD to form NAD. Uses ammonia as a nitrogen source. This Shewanella piezotolerans (strain WP3 / JCM 13877) protein is NH(3)-dependent NAD(+) synthetase.